Reading from the N-terminus, the 210-residue chain is Cytochrome c biogenesis ATP-binding export protein CcmA (210 aa).

In terms of domain architecture, ABC transporter spans 1-208 (MHLNQLVISH…KVRTLSLDQF (208 aa)). Residue 38–45 (GHNGIGKT) coordinates ATP.

The protein belongs to the ABC transporter superfamily. CcmA exporter (TC 3.A.1.107) family. In terms of assembly, the complex is composed of two ATP-binding proteins (CcmA) and two transmembrane proteins (CcmB).

The protein localises to the cell inner membrane. It carries out the reaction heme b(in) + ATP + H2O = heme b(out) + ADP + phosphate + H(+). Its function is as follows. Part of the ABC transporter complex CcmAB involved in the biogenesis of c-type cytochromes; once thought to export heme, this seems not to be the case, but its exact role is uncertain. Responsible for energy coupling to the transport system. The chain is Cytochrome c biogenesis ATP-binding export protein CcmA from Haemophilus ducreyi (strain 35000HP / ATCC 700724).